The following is a 291-amino-acid chain: Ribosomal RNA small subunit methyltransferase H (291 aa).

S-adenosyl-L-methionine is bound by residues 31–33, aspartate 49, phenylalanine 76, aspartate 97, and glutamine 104; that span reads GGY.

Belongs to the methyltransferase superfamily. RsmH family.

The protein resides in the cytoplasm. The catalysed reaction is cytidine(1402) in 16S rRNA + S-adenosyl-L-methionine = N(4)-methylcytidine(1402) in 16S rRNA + S-adenosyl-L-homocysteine + H(+). Specifically methylates the N4 position of cytidine in position 1402 (C1402) of 16S rRNA. The sequence is that of Ribosomal RNA small subunit methyltransferase H from Anaplasma marginale (strain Florida).